The sequence spans 1250 residues: DNA-directed RNA polymerase subunit beta'' (1250 aa).

Positions 224, 314, 321, and 324 each coordinate Zn(2+).

This sequence belongs to the RNA polymerase beta' chain family. RpoC2 subfamily. As to quaternary structure, in plastids the minimal PEP RNA polymerase catalytic core is composed of four subunits: alpha, beta, beta', and beta''. When a (nuclear-encoded) sigma factor is associated with the core the holoenzyme is formed, which can initiate transcription. Requires Zn(2+) as cofactor.

The protein localises to the plastid. The protein resides in the chloroplast. It carries out the reaction RNA(n) + a ribonucleoside 5'-triphosphate = RNA(n+1) + diphosphate. In terms of biological role, DNA-dependent RNA polymerase catalyzes the transcription of DNA into RNA using the four ribonucleoside triphosphates as substrates. The sequence is that of DNA-directed RNA polymerase subunit beta'' from Staurastrum punctulatum (Green alga).